Consider the following 318-residue polypeptide: MVFFPHRHLIGIKGLTEQDITYLLDKADEAVKISRQREKKTSTLRGLTQINLFFEASTRTQASFELAGKRLGADVMNMSVGNSSVKKGETLIDTAMTLNAMRPDVLVIRHSSAGAAALLAQKVSCSVVNAGDGQHEHPTQALLDALTIRRAKGKLSRIIVAICGDVLHSRVARSNILLLNAMGARVRVVAPATLLPAGIADMGVEVFHSMKEGLKDADVVMMLRLQRERMSGAFVPSVREYYHFYGLDAETLKAAKEDALVMHPGPMNRGVEIASEVADGPQSVIAEQVEMGVAVRMAVMETLLVSQNQGPRTEGAGA.

2 residues coordinate carbamoyl phosphate: R59 and T60. Residue K87 coordinates L-aspartate. Carbamoyl phosphate-binding residues include R109, H137, and Q140. Residues R170 and R224 each contribute to the L-aspartate site. Carbamoyl phosphate-binding residues include G265 and P266.

Belongs to the aspartate/ornithine carbamoyltransferase superfamily. ATCase family. Heterododecamer (2C3:3R2) of six catalytic PyrB chains organized as two trimers (C3), and six regulatory PyrI chains organized as three dimers (R2).

The enzyme catalyses carbamoyl phosphate + L-aspartate = N-carbamoyl-L-aspartate + phosphate + H(+). The protein operates within pyrimidine metabolism; UMP biosynthesis via de novo pathway; (S)-dihydroorotate from bicarbonate: step 2/3. Catalyzes the condensation of carbamoyl phosphate and aspartate to form carbamoyl aspartate and inorganic phosphate, the committed step in the de novo pyrimidine nucleotide biosynthesis pathway. The polypeptide is Aspartate carbamoyltransferase catalytic subunit (Rhizobium rhizogenes (strain K84 / ATCC BAA-868) (Agrobacterium radiobacter)).